The following is a 790-amino-acid chain: MLVPLSLLQKFFSSPLSIEEILQACDRIGIEAECSNVFPDSLNTVVTGKILSASPHPDAERLTVAIVFDGKGERQIICGAPNCRAGIIVPIALPGAKLRNASGEITTIKKAKVRGLESQGMCCGADELGFPHLQKAERGIFEFPADTPLGESACMLLAGAPLECSLTPNLGHCASLLGLAREISFLSPVSLNIPEEFSFASLPQETSICDMHDAGACPIFYSVKISGLSCRRSPEYLQAALTALGQKPLNAIVDITNYVMLSLGQPLHAYDSQAVEQKSLHAATLQSAQPLTLLNQETYTLPAGSLVVADQHNILGLAGVMGSAASSCSENTTEIILEAAYFQPQAVRKYQRTIQLHTEAAYRFTRGVDPQGVLPVLHAAIHMIQSLFPDAQISPIQKIGDDSFSPLSLSVRPKTIKRLLDIEFSTAEIVAKLSSLGFQTAVEEQAVRVEVPSYRHDIQEETDLVEEICRTTPFVQKTQKILPTYTPIYSLKRELTAFLANGGLQQFFTYSLLDTEVSSLSLQESSLIPVQNSSWKLRDSLLPGMLKSAATNLHRQAPYVYAFEIGNVYSKEQNRYQEEERVAILLSRQVMDDSWQGKTPLSFYTIKGWVEKLLCQSGASIEDFSLQPSQHPNFHPYQQAALYQKKHLLGIFGTLHPQLCRKAQIKHDVVFAELSLNVLLSLKKKSGPHYVPYPIYPASSRDITITIDRDLPADLVRRELLSFESKWLESVHIVSVYQGRDSASQSKNVSLRMVFRDHERTLSGQEIEEEYERLTALLDKKLANIGQGNS.

One can recognise a tRNA-binding domain in the interval 39–154 (PDSLNTVVTG…ADTPLGESAC (116 aa)). Residues 404–483 (FSPLSLSVRP…FVQKTQKILP (80 aa)) enclose the B5 domain. 4 residues coordinate Mg(2+): Asp-457, Asp-463, Glu-466, and Glu-467. The FDX-ACB domain maps to 694–790 (PIYPASSRDI…KLANIGQGNS (97 aa)).

Belongs to the phenylalanyl-tRNA synthetase beta subunit family. Type 1 subfamily. Tetramer of two alpha and two beta subunits. Requires Mg(2+) as cofactor.

Its subcellular location is the cytoplasm. It catalyses the reaction tRNA(Phe) + L-phenylalanine + ATP = L-phenylalanyl-tRNA(Phe) + AMP + diphosphate + H(+). This is Phenylalanine--tRNA ligase beta subunit from Chlamydia trachomatis serovar A (strain ATCC VR-571B / DSM 19440 / HAR-13).